The primary structure comprises 621 residues: DEAD-box ATP-dependent RNA helicase 39 (621 aa).

The Q motif signature appears at 112 to 140 (ENFQELGLSEEVMGALQELNIEVPTEIQC). Residues 143–330 (IPAVMERKSV…DEEFQGIEHL (188 aa)) enclose the Helicase ATP-binding domain. Residue 156-163 (SHTGSGKT) participates in ATP binding. The short motif at 270-273 (DEAD) is the DEAD box element. The region spanning 355 to 505 (KLEALLQVLE…LESLTTDNVR (151 aa)) is the Helicase C-terminal domain. The segment at 497–621 (ESLTTDNVRR…RGKSSSARAS (125 aa)) is disordered. The span at 503–537 (NVRRDAARTHITQEKGRSVKQIREVSKQRNSRDKP) shows a compositional bias: basic and acidic residues. Positions 555–572 (KSSSSSFSKPRKASSPPE) are enriched in low complexity.

This sequence belongs to the DEAD box helicase family.

The catalysed reaction is ATP + H2O = ADP + phosphate + H(+). The protein is DEAD-box ATP-dependent RNA helicase 39 (RH39) of Arabidopsis thaliana (Mouse-ear cress).